Here is a 370-residue protein sequence, read N- to C-terminus: Chorismate synthase (370 aa).

Position 48 (arginine 48) interacts with NADP(+). FMN contacts are provided by residues 125–127 (RSS), 241–242 (NA), glycine 286, 301–305 (KPTSS), and arginine 327.

The protein belongs to the chorismate synthase family. In terms of assembly, homotetramer. The cofactor is FMNH2.

It carries out the reaction 5-O-(1-carboxyvinyl)-3-phosphoshikimate = chorismate + phosphate. The protein operates within metabolic intermediate biosynthesis; chorismate biosynthesis; chorismate from D-erythrose 4-phosphate and phosphoenolpyruvate: step 7/7. Catalyzes the anti-1,4-elimination of the C-3 phosphate and the C-6 proR hydrogen from 5-enolpyruvylshikimate-3-phosphate (EPSP) to yield chorismate, which is the branch point compound that serves as the starting substrate for the three terminal pathways of aromatic amino acid biosynthesis. This reaction introduces a second double bond into the aromatic ring system. The polypeptide is Chorismate synthase (Ruegeria sp. (strain TM1040) (Silicibacter sp.)).